A 561-amino-acid polypeptide reads, in one-letter code: Sensor histidine kinase BtsS (561 aa).

At 1–3 the chain is on the cytoplasmic side; it reads MYD. A helical membrane pass occupies residues 4–24; sequence FNLVLLLLQQMCVFLVIAWLM. Topologically, residues 25 to 43 are periplasmic; it reads SKTPLFIPLMQVTVRLPHK. A helical membrane pass occupies residues 44-64; that stretch reads FLCYIVFSIFCIMGTWFGLHI. Topologically, residues 65–72 are cytoplasmic; it reads DDSIANTR. The chain crosses the membrane as a helical span at residues 73–93; sequence AIGAVMGGLLGGPVVGGLVGL. Topologically, residues 94–108 are periplasmic; it reads TGGLHRYSMGGMTAL. A helical membrane pass occupies residues 109–129; the sequence is SCMISTIVEGLLGGLVHSILI. Residues 130 to 140 lie on the Cytoplasmic side of the membrane; sequence RRGRTDKVFNP. The helical transmembrane segment at 141–161 threads the bilayer; that stretch reads ITAGAVTFVAEMVQMLIILAI. Residues 162–170 are Periplasmic-facing; that stretch reads ARPYEDAVR. A helical membrane pass occupies residues 171 to 191; sequence LVSNIAAPMMVTNTVGAALFM. Residues 192 to 561 lie on the Cytoplasmic side of the membrane; sequence RILLDKRAMF…TLRLPWRDEA (370 aa). One can recognise a Histidine kinase domain in the interval 354–559; it reads QILAGQYERQ…RITLRLPWRD (206 aa).

In terms of processing, autophosphorylated.

The protein localises to the cell inner membrane. It catalyses the reaction ATP + protein L-histidine = ADP + protein N-phospho-L-histidine.. Its function is as follows. Member of the two-component regulatory system BtsS/BtsR. BtsS is a high-affinity receptor for extracellular pyruvate that activates BtsR by phosphorylation. The sequence is that of Sensor histidine kinase BtsS from Escherichia coli O6:H1 (strain CFT073 / ATCC 700928 / UPEC).